Consider the following 614-residue polypeptide: Replication protein A 70 kDa DNA-binding subunit (614 aa).

Positions 112-178 (GNPVPYNEGQ…SSVKTPGGTQ (67 aa)) are disordered. Composition is skewed to polar residues over residues 120–130 (GQGQQRSSAPT) and 158–178 (PSNQ…GGTQ). The segment at residues 194 to 278 (WTICARVTQK…VKNDYEITFN (85 aa)) is a DNA-binding region (OB). Residues 478–500 (CPSQDCNKKVIDQQNGLYRCEKC) form a C4-type zinc finger.

This sequence belongs to the replication factor A protein 1 family. In terms of assembly, component of the heterotrimeric canonical replication protein A complex (RPA).

The protein localises to the nucleus. It localises to the PML body. Its function is as follows. As part of the heterotrimeric replication protein A complex (RPA/RP-A), binds and stabilizes single-stranded DNA intermediates, that form during DNA replication or upon DNA stress. It prevents their reannealing and in parallel, recruits and activates different proteins and complexes involved in DNA metabolism. Thereby, it plays an essential role both in DNA replication and the cellular response to DNA damage. This Gallus gallus (Chicken) protein is Replication protein A 70 kDa DNA-binding subunit (RPA1).